Reading from the N-terminus, the 177-residue chain is Large ribosomal subunit protein uL6 (177 aa).

Belongs to the universal ribosomal protein uL6 family. As to quaternary structure, part of the 50S ribosomal subunit.

Functionally, this protein binds to the 23S rRNA, and is important in its secondary structure. It is located near the subunit interface in the base of the L7/L12 stalk, and near the tRNA binding site of the peptidyltransferase center. This chain is Large ribosomal subunit protein uL6, found in Pseudomonas putida (strain ATCC 700007 / DSM 6899 / JCM 31910 / BCRC 17059 / LMG 24140 / F1).